The sequence spans 573 residues: DNA damage-binding protein CMR1 (573 aa).

The disordered stretch occupies residues 27–94 (DSLNDSISRE…EMEKAEERKR (68 aa)). Residues 72–152 (TMEDSEEDKQ…EEIKKEEDST (81 aa)) adopt a coiled-coil conformation. Positions 79–94 (DKQMREEMEKAEERKR) are enriched in basic and acidic residues. WD repeat units lie at residues 218–259 (ITQQ…DDET), 268–308 (PHGK…STEV), 319–357 (DYPLGVSDINVADNNLLYMTTLSGNFYRYDMRSPFKQGE), 361–401 (LHDK…QKNS), 418–456 (HSRLSVSCVDWNHDNHLVCNGYDDTVNVFDLSGSDKLPL), 495–538 (GRWV…LCHL), and 542–573 (DRMTAVPAVSMLHPTENWCVGGSASGKVYLFE).

This sequence belongs to the WD repeat DDB2/WDR76 family.

In terms of biological role, DNA-binding protein that binds to both single- and double-stranded DNA. Binds preferentially to UV-damaged DNA. May be involved in DNA-metabolic processes. This chain is DNA damage-binding protein CMR1, found in Meyerozyma guilliermondii (strain ATCC 6260 / CBS 566 / DSM 6381 / JCM 1539 / NBRC 10279 / NRRL Y-324) (Yeast).